Reading from the N-terminus, the 415-residue chain is Multidrug resistance protein MdtA (415 aa).

Residues 1 to 21 (MKGSYKSRWVIVIVVVIAAIA) form the signal peptide. Polar residues predominate over residues 31-47 (DSQSAAPGATKQAQQSP). Disordered regions lie at residues 31–60 (DSQS…GPLA) and 392–415 (EAQS…GARS). Residues 399 to 415 (PEEKATSREYAKKGARS) show a composition bias toward basic and acidic residues.

The protein belongs to the membrane fusion protein (MFP) (TC 8.A.1) family. In terms of assembly, part of a tripartite efflux system composed of MdtA, MdtB and MdtC.

Its subcellular location is the cell inner membrane. Functionally, the MdtABC tripartite complex confers resistance against novobiocin and deoxycholate. This Escherichia coli O8 (strain IAI1) protein is Multidrug resistance protein MdtA.